The sequence spans 465 residues: Adenosine 3'-phospho 5'-phosphosulfate transporter 1 (465 aa).

Helical transmembrane passes span 13 to 33 (LVIC…SDLL), 61 to 81 (FLKL…GFLI), 142 to 162 (AVQL…WGVL), 185 to 205 (QFLV…YLQW), 270 to 290 (SYEY…MSGS), 299 to 319 (VTTL…SFTA), 339 to 359 (GVNL…GGFM), 370 to 390 (KFVF…LFIY), 391 to 407 (HTID…IMTL), and 424 to 444 (ISLL…LRVY).

This sequence belongs to the nucleotide-sugar transporter family. SLC35B subfamily. In terms of tissue distribution, expressed throughout embryogenesis. During oogenesis, it is expressed strongly in the nurse cells of the germline. Maternally expressed at the syncytial blastoderm stage. Zygotically expressed, from after germ-band elongation in the invaginating salivary gland placodes. Remains expressed predominantly in this tissue throughout embryogenesis, but low-level expression may also be present throughout the embryo.

Its subcellular location is the golgi apparatus membrane. Its function is as follows. Mediates the transport of adenosine 3'-phospho 5'-phosphosulfate (PAPS), from cytosol into Golgi. PAPS is a universal sulfuryl donor for sulfation events that take place in the Golgi. Required for the dorsoventral patterning, suggesting that it mediates the transport of the sulfate donor required for the sulfotransferase activity of pip (pipe). The polypeptide is Adenosine 3'-phospho 5'-phosphosulfate transporter 1 (sll) (Drosophila melanogaster (Fruit fly)).